Consider the following 1290-residue polypeptide: Nonribosomal peptide synthetase 6 (1290 aa).

The interval 1 to 27 (MTAIDVPWLSTPRRDNSHGTRSNSSCQ) is disordered. Positions 260-657 (SYQELDCQAS…AQVEHHLRSC (398 aa)) are adenylation. Residues 775–851 (APETELERKL…GLAQTHRHPV (77 aa)) form the Carrier domain. At Ser812 the chain carries O-(pantetheine 4'-phosphoryl)serine. The tract at residues 846–870 (THRHPVRRAEVPRSSHDPDPFGRVR) is disordered. Over residues 852–870 (RRAEVPRSSHDPDPFGRVR) the composition is skewed to basic and acidic residues. Residues 914-1162 (GGQLDPEQLR…PCMNIIPVRV (249 aa)) form a condensation region.

This sequence belongs to the NRP synthetase family.

Functionally, nonribosomal peptide synthesis (NRPS) is a key mechanism responsible for the biosynthesis of bioactive metabolites which are potentially contributing to organismal virulence. This chain is Nonribosomal peptide synthetase 6 (NRPS6), found in Aspergillus fumigatus (strain ATCC MYA-4609 / CBS 101355 / FGSC A1100 / Af293) (Neosartorya fumigata).